We begin with the raw amino-acid sequence, 202 residues long: Small ribosomal subunit protein uS5 (202 aa).

The segment covering 1 to 13 has biased composition (gly residues); that stretch reads MPGQQRRGGGSGG. The tract at residues 1–31 is disordered; it reads MPGQQRRGGGSGGSDRRERRDRSGSGPAQEK. The segment covering 14–23 has biased composition (basic and acidic residues); the sequence is SDRRERRDRS. The 64-residue stretch at 34–97 folds into the S5 DRBM domain; it reads YVERVVAINR…EEAKKHFFKV (64 aa).

This sequence belongs to the universal ribosomal protein uS5 family. Part of the 30S ribosomal subunit. Contacts proteins S4 and S8.

Functionally, with S4 and S12 plays an important role in translational accuracy. In terms of biological role, located at the back of the 30S subunit body where it stabilizes the conformation of the head with respect to the body. This is Small ribosomal subunit protein uS5 from Frankia casuarinae (strain DSM 45818 / CECT 9043 / HFP020203 / CcI3).